The sequence spans 417 residues: Serine hydroxymethyltransferase (417 aa).

(6S)-5,6,7,8-tetrahydrofolate-binding positions include leucine 120 and 124 to 126 (GHL). The residue at position 229 (lysine 229) is an N6-(pyridoxal phosphate)lysine.

Belongs to the SHMT family. Homodimer. The cofactor is pyridoxal 5'-phosphate.

Its subcellular location is the cytoplasm. It catalyses the reaction (6R)-5,10-methylene-5,6,7,8-tetrahydrofolate + glycine + H2O = (6S)-5,6,7,8-tetrahydrofolate + L-serine. The protein operates within one-carbon metabolism; tetrahydrofolate interconversion. It functions in the pathway amino-acid biosynthesis; glycine biosynthesis; glycine from L-serine: step 1/1. Catalyzes the reversible interconversion of serine and glycine with tetrahydrofolate (THF) serving as the one-carbon carrier. This reaction serves as the major source of one-carbon groups required for the biosynthesis of purines, thymidylate, methionine, and other important biomolecules. Also exhibits THF-independent aldolase activity toward beta-hydroxyamino acids, producing glycine and aldehydes, via a retro-aldol mechanism. This is Serine hydroxymethyltransferase from Anaeromyxobacter dehalogenans (strain 2CP-C).